The chain runs to 342 residues: N-acetyl-gamma-glutamyl-phosphate reductase (342 aa).

C148 is a catalytic residue.

This sequence belongs to the NAGSA dehydrogenase family. Type 1 subfamily.

Its subcellular location is the cytoplasm. It carries out the reaction N-acetyl-L-glutamate 5-semialdehyde + phosphate + NADP(+) = N-acetyl-L-glutamyl 5-phosphate + NADPH + H(+). The protein operates within amino-acid biosynthesis; L-arginine biosynthesis; N(2)-acetyl-L-ornithine from L-glutamate: step 3/4. Functionally, catalyzes the NADPH-dependent reduction of N-acetyl-5-glutamyl phosphate to yield N-acetyl-L-glutamate 5-semialdehyde. This chain is N-acetyl-gamma-glutamyl-phosphate reductase, found in Methanococcus vannielii (strain ATCC 35089 / DSM 1224 / JCM 13029 / OCM 148 / SB).